Reading from the N-terminus, the 751-residue chain is Palmitoyltransferase ZDHHC8B (751 aa).

At 1–13 the chain is on the cytoplasmic side; that stretch reads MPNSVGKRFKPTK. A helical transmembrane segment spans residues 14–34; it reads YIPVSTAATLLVGSTTLFFVF. At 35-41 the chain is on the extracellular side; that stretch reads TCPWLTK. Residues 42–62 form a helical membrane-spanning segment; the sequence is AVSPVVPLYNGIVFLFVLANF. Residues 63-148 are Cytoplasmic-facing; that stretch reads SMATFMDPGV…NCIGRRNYRY (86 aa). In terms of domain architecture, DHHC spans 104–154; sequence KWCATCHFYRPPRCSHCSVCDNCVEEFDHHCPWVNNCIGRRNYRYFFLFLL. Cys-134 (S-palmitoyl cysteine intermediate) is an active-site residue. Residues 149–169 traverse the membrane as a helical segment; sequence FFLFLLSLSVHMVGVFSFGLL. At 170–185 the chain is on the extracellular side; that stretch reads FVLHHLETLSALHTTV. A helical membrane pass occupies residues 186 to 206; the sequence is TLVVMCVTGLFFIPVMGLTGF. Residues 207–751 are Cytoplasmic-facing; it reads HMVLVARGRT…VGGTTYEISV (545 aa). Disordered stretches follow at residues 293-346, 437-461, 633-659, 666-685, and 703-736; these read RSKS…PSTP, CTPL…SPGT, RSSA…GMNR, RSPV…SPSY, and HLGT…HTSV. Over residues 326 to 338 the composition is skewed to low complexity; it reads SQLTSSEESSLSS. Composition is skewed to polar residues over residues 633 to 651, 669 to 681, and 724 to 733; these read RSSA…TSLH, VHQS…SVPR, and GTPSGTPSRH.

The protein belongs to the DHHC palmitoyltransferase family. ERF2/ZDHHC9 subfamily.

The protein localises to the golgi apparatus membrane. Its subcellular location is the mitochondrion membrane. It catalyses the reaction L-cysteinyl-[protein] + hexadecanoyl-CoA = S-hexadecanoyl-L-cysteinyl-[protein] + CoA. In terms of biological role, palmitoyltransferase that catalyzes the addition of palmitate onto various protein substrates and therefore function in several unrelated biological processes. In Danio rerio (Zebrafish), this protein is Palmitoyltransferase ZDHHC8B.